The chain runs to 20 residues: Protein PR-L2 (20 aa).

Residues 1 to 20 (SVFAFENEQSSTIAPARLYK) are disordered.

It belongs to the BetVI family.

The polypeptide is Protein PR-L2 (Lupinus luteus (European yellow lupine)).